A 417-amino-acid polypeptide reads, in one-letter code: Histidine--tRNA ligase (417 aa).

The protein belongs to the class-II aminoacyl-tRNA synthetase family. As to quaternary structure, homodimer.

The protein localises to the cytoplasm. It catalyses the reaction tRNA(His) + L-histidine + ATP = L-histidyl-tRNA(His) + AMP + diphosphate + H(+). This is Histidine--tRNA ligase from Nitratidesulfovibrio vulgaris (strain DP4) (Desulfovibrio vulgaris).